The chain runs to 467 residues: UDP-glycosyltransferase 71D1 (467 aa).

The Proton acceptor role is filled by H16. Residue H16 participates in an anthocyanidin binding. Residue D122 is the Charge relay of the active site. UDP-alpha-D-glucose contacts are provided by T144, Q341, H356, W359, N360, S361, and E364. A379 contacts an anthocyanidin. Positions 380 and 381 each coordinate UDP-alpha-D-glucose.

The protein belongs to the UDP-glycosyltransferase family.

The enzyme catalyses a flavonol + UDP-alpha-D-glucose = a flavonol 3-O-beta-D-glucoside + UDP + H(+). Its function is as follows. Possesses quercetin 3-O-glucosyltransferase activity in vitro. The protein is UDP-glycosyltransferase 71D1 (UGT71D1) of Arabidopsis thaliana (Mouse-ear cress).